The primary structure comprises 405 residues: DNA polymerase IV 1 (405 aa).

The UmuC domain maps to 23-203 (IAHIDCDAFY…RPVTTIWGVG (181 aa)). Residues aspartate 27 and aspartate 120 each contribute to the Mg(2+) site. Glutamate 121 is a catalytic residue.

The protein belongs to the DNA polymerase type-Y family. In terms of assembly, monomer. Mg(2+) serves as cofactor.

It localises to the cytoplasm. It catalyses the reaction DNA(n) + a 2'-deoxyribonucleoside 5'-triphosphate = DNA(n+1) + diphosphate. Its function is as follows. Poorly processive, error-prone DNA polymerase involved in untargeted mutagenesis. Copies undamaged DNA at stalled replication forks, which arise in vivo from mismatched or misaligned primer ends. These misaligned primers can be extended by PolIV. Exhibits no 3'-5' exonuclease (proofreading) activity. May be involved in translesional synthesis, in conjunction with the beta clamp from PolIII. In Agrobacterium fabrum (strain C58 / ATCC 33970) (Agrobacterium tumefaciens (strain C58)), this protein is DNA polymerase IV 1 (dinB1).